Consider the following 98-residue polypeptide: Small ribosomal subunit protein uS19 (98 aa).

The interval 77-98 is disordered; the sequence is TRTYRGHAGGKAEKGGSAPKRK.

The protein belongs to the universal ribosomal protein uS19 family.

In terms of biological role, protein S19 forms a complex with S13 that binds strongly to the 16S ribosomal RNA. This Prosthecochloris aestuarii (strain DSM 271 / SK 413) protein is Small ribosomal subunit protein uS19.